The primary structure comprises 357 residues: MPQTLHVHSRVKDYDILFTDHVLKTLADCLGERKQRKLLFITDQTVYHLYQTLFEEFAQQYNAFVHVCPPGGQSKSLERVSAIYDQLIAENFSKKDMIITIGGGVVGDLGGFVAATYYRGIPYIQIPTTLLSQVDSSIGGKVGVHFKGLTNMIGSIYPPEAIIISTIFLETLPQREFSCGISEMLKIGFIHDKPLFQQLRDFQKETDKQGLERLIYQSISNKKRIVEQDEFENGLRMSLNFGHTLGHAIESLCHHDFYHHGEAIAIGMVVDAKLAVSKGLLPKEDLDSLLQVFERYQLPTSLERADVSATSLFDVFKTDKKNSEQHIIFILPTETGFTTLAINKDDHQFVEKLDSLL.

NAD(+) contacts are provided by residues 104-108 (GVVGD), 128-129 (TT), Lys-141, and 168-171 (FLET). Glu-183, His-243, and His-260 together coordinate Zn(2+).

The protein belongs to the sugar phosphate cyclases superfamily. Dehydroquinate synthase family. It depends on NAD(+) as a cofactor. The cofactor is Co(2+). Zn(2+) serves as cofactor.

Its subcellular location is the cytoplasm. The enzyme catalyses 7-phospho-2-dehydro-3-deoxy-D-arabino-heptonate = 3-dehydroquinate + phosphate. The protein operates within metabolic intermediate biosynthesis; chorismate biosynthesis; chorismate from D-erythrose 4-phosphate and phosphoenolpyruvate: step 2/7. In terms of biological role, catalyzes the conversion of 3-deoxy-D-arabino-heptulosonate 7-phosphate (DAHP) to dehydroquinate (DHQ). This is 3-dehydroquinate synthase from Streptococcus pyogenes serotype M6 (strain ATCC BAA-946 / MGAS10394).